The chain runs to 380 residues: Alcohol dehydrogenase (380 aa).

Zn(2+)-binding residues include Cys48, Thr50, His70, Cys100, Cys103, Cys106, Cys114, and Cys178. An alcohol is bound by residues Thr50 and His70. Residue Thr50 coordinates NAD(+). NAD(+) contacts are provided by residues 203-208 (GLGAVG), Asp227, Arg232, Thr273, Val296, 296-298 (VGV), Phe323, and Arg373.

This sequence belongs to the zinc-containing alcohol dehydrogenase family. In terms of assembly, homodimer. Zn(2+) serves as cofactor.

The protein localises to the cytoplasm. The catalysed reaction is a primary alcohol + NAD(+) = an aldehyde + NADH + H(+). It carries out the reaction a secondary alcohol + NAD(+) = a ketone + NADH + H(+). This is Alcohol dehydrogenase (ADH) from Malus domestica (Apple).